The chain runs to 391 residues: Probable FAD-dependent oxidoreductase PA4991 (391 aa).

FAD contacts are provided by residues A17, E36, 44–45, 49–51, and 346–347; these read QS, QGI, and LA.

It belongs to the DAO family. Monomer. It depends on FAD as a cofactor.

Probably functions as a FAD-dependent oxidoreductase, whose physiological substrate is unknown. Does not display amino-acid oxidase or glycerol-3-phosphate dehydrogenase activities. Is essential for growth of P.aeruginosa in the sputum of cystic fibrosis patients. This Pseudomonas aeruginosa (strain ATCC 15692 / DSM 22644 / CIP 104116 / JCM 14847 / LMG 12228 / 1C / PRS 101 / PAO1) protein is Probable FAD-dependent oxidoreductase PA4991.